A 510-amino-acid chain; its full sequence is Lysine--tRNA ligase (510 aa).

Residues glutamate 420 and glutamate 427 each coordinate Mg(2+).

This sequence belongs to the class-II aminoacyl-tRNA synthetase family. Homodimer. The cofactor is Mg(2+).

It is found in the cytoplasm. It catalyses the reaction tRNA(Lys) + L-lysine + ATP = L-lysyl-tRNA(Lys) + AMP + diphosphate. In Vibrio vulnificus (strain CMCP6), this protein is Lysine--tRNA ligase.